Consider the following 408-residue polypeptide: Arginine biosynthesis bifunctional protein ArgJ (408 aa).

Substrate-binding residues include Thr156, Lys182, Thr193, Glu279, Asn403, and Thr408. Thr193 functions as the Nucleophile in the catalytic mechanism.

Belongs to the ArgJ family. As to quaternary structure, heterotetramer of two alpha and two beta chains.

The protein resides in the cytoplasm. It carries out the reaction N(2)-acetyl-L-ornithine + L-glutamate = N-acetyl-L-glutamate + L-ornithine. It catalyses the reaction L-glutamate + acetyl-CoA = N-acetyl-L-glutamate + CoA + H(+). The protein operates within amino-acid biosynthesis; L-arginine biosynthesis; L-ornithine and N-acetyl-L-glutamate from L-glutamate and N(2)-acetyl-L-ornithine (cyclic): step 1/1. It participates in amino-acid biosynthesis; L-arginine biosynthesis; N(2)-acetyl-L-ornithine from L-glutamate: step 1/4. In terms of biological role, catalyzes two activities which are involved in the cyclic version of arginine biosynthesis: the synthesis of N-acetylglutamate from glutamate and acetyl-CoA as the acetyl donor, and of ornithine by transacetylation between N(2)-acetylornithine and glutamate. The protein is Arginine biosynthesis bifunctional protein ArgJ of Methylococcus capsulatus (strain ATCC 33009 / NCIMB 11132 / Bath).